A 608-amino-acid polypeptide reads, in one-letter code: Glutamyl-tRNA(Gln) amidotransferase subunit E (608 aa).

This sequence belongs to the GatB/GatE family. GatE subfamily. Heterodimer of GatD and GatE.

It carries out the reaction L-glutamyl-tRNA(Gln) + L-glutamine + ATP + H2O = L-glutaminyl-tRNA(Gln) + L-glutamate + ADP + phosphate + H(+). Allows the formation of correctly charged Gln-tRNA(Gln) through the transamidation of misacylated Glu-tRNA(Gln) in organisms which lack glutaminyl-tRNA synthetase. The reaction takes place in the presence of glutamine and ATP through an activated gamma-phospho-Glu-tRNA(Gln). The GatDE system is specific for glutamate and does not act on aspartate. This chain is Glutamyl-tRNA(Gln) amidotransferase subunit E, found in Pyrobaculum aerophilum (strain ATCC 51768 / DSM 7523 / JCM 9630 / CIP 104966 / NBRC 100827 / IM2).